A 477-amino-acid chain; its full sequence is MAANYLHGVETIEKETGSRPVKVVKSAVIGLIGTAPIGPVNTPVQSLSDVDAAQFGPQLAGFTIPQALDAVYDYGSGTVIVINVLDPAVHKSNAANEPVTFDAATGRAKLAHPAAANLVLKNDSGGTTYAEGTDYAVDLINGVITRIKTGTIPPGATAAKATYDYADPTKVTAADIIGAVNAAGMRTGMKALKDTYNLYGYFSKILIAPAYCTQNSVSVELEAMAVQLGAIAYIDAPIGTTLAQALAGRGPAGTINFNTSSDRVRLCYPHVKVYDTATNAERLEPLSSRAAGLRARVDLDKGYWWSSSNQQLVGVTGVERPLSAMIDDPQSDVNMLNEQGITTVFSSYGSGLRLWGNRTAAWPTVTHMRNFENVRRTGDVINESLRYFSQQFVDAPIDQGLIDSLVESVNGFGRKLIGDGALLGFKAWFDPARNPKEELAAGHLLINYKYTVPPPLERLTYETEITSEYLLTLKGGN.

It belongs to the myoviridae tail sheath protein family. In terms of assembly, homomultimer.

It is found in the virion. It localises to the host cytoplasm. In terms of biological role, polymerizes as an extended structure around the baseplate-tail tube complex. During ejection, the sheath shifts to a contracted form, thereby making the inner tail tube protrude through the host cell envelope. This chain is Tail sheath protein, found in Burkholderia phage BcepMu (isolate -/United States/Summer/2002) (Bacteriophage BcepMu).